A 307-amino-acid chain; its full sequence is Porphobilinogen deaminase (307 aa).

Position 241 is an S-(dipyrrolylmethanemethyl)cysteine (C241).

The protein belongs to the HMBS family. In terms of assembly, monomer. Dipyrromethane is required as a cofactor.

The enzyme catalyses 4 porphobilinogen + H2O = hydroxymethylbilane + 4 NH4(+). The protein operates within porphyrin-containing compound metabolism; protoporphyrin-IX biosynthesis; coproporphyrinogen-III from 5-aminolevulinate: step 2/4. Its function is as follows. Tetrapolymerization of the monopyrrole PBG into the hydroxymethylbilane pre-uroporphyrinogen in several discrete steps. The polypeptide is Porphobilinogen deaminase (Coxiella burnetii (strain RSA 331 / Henzerling II)).